Consider the following 394-residue polypeptide: Phosphoglycerate kinase (394 aa).

Residues 21 to 23, Arg36, 59 to 62, Arg113, and Arg146 each bind substrate; these read DLN and HLGR. ATP is bound by residues Lys197, Glu319, and 345-348; that span reads GGDT.

This sequence belongs to the phosphoglycerate kinase family. Monomer.

The protein resides in the cytoplasm. The catalysed reaction is (2R)-3-phosphoglycerate + ATP = (2R)-3-phospho-glyceroyl phosphate + ADP. The protein operates within carbohydrate degradation; glycolysis; pyruvate from D-glyceraldehyde 3-phosphate: step 2/5. The protein is Phosphoglycerate kinase of Halorhodospira halophila (strain DSM 244 / SL1) (Ectothiorhodospira halophila (strain DSM 244 / SL1)).